Here is a 244-residue protein sequence, read N- to C-terminus: Ribosomal RNA small subunit methyltransferase NEP1 (244 aa).

The tract at residues 1-34 (MAAPSDGFKPRERSGGEQAQDWDALPPKRPRLGA) is disordered. At Ala2 the chain carries N-acetylalanine. 2 positions are modified to phosphoserine: Ser5 and Ser14. Residues Thr176, Gly201, Gly206, and 219–224 (ISNYPL) contribute to the S-adenosyl-L-methionine site.

The protein belongs to the class IV-like SAM-binding methyltransferase superfamily. RNA methyltransferase NEP1 family. Homodimer. Part of the small subunit (SSU) processome, composed of more than 70 proteins and the RNA chaperone small nucleolar RNA (snoRNA) U3.

Its subcellular location is the nucleus. It is found in the nucleolus. The enzyme catalyses pseudouridine(1248) in human 18S rRNA + S-adenosyl-L-methionine = N(1)-methylpseudouridine(1248) in human 18S rRNA + S-adenosyl-L-homocysteine + H(+). In terms of biological role, S-adenosyl-L-methionine-dependent pseudouridine N(1)-methyltransferase that methylates pseudouridine at position 1248 (Psi1248) in 18S rRNA. Involved the biosynthesis of the hypermodified N1-methyl-N3-(3-amino-3-carboxypropyl) pseudouridine (m1acp3-Psi) conserved in eukaryotic 18S rRNA. Is not able to methylate uridine at this position. Also has an essential role in 40S ribosomal subunit biogenesis independent on its methyltransferase activity, facilitating the incorporation of ribosomal protein S19 during the formation of pre-ribosomes. Part of the small subunit (SSU) processome, first precursor of the small eukaryotic ribosomal subunit. During the assembly of the SSU processome in the nucleolus, many ribosome biogenesis factors, an RNA chaperone and ribosomal proteins associate with the nascent pre-rRNA and work in concert to generate RNA folding, modifications, rearrangements and cleavage as well as targeted degradation of pre-ribosomal RNA by the RNA exosome. This Homo sapiens (Human) protein is Ribosomal RNA small subunit methyltransferase NEP1.